Reading from the N-terminus, the 217-residue chain is Zinc finger CCHC-type and RNA-binding motif-containing protein 1 (217 aa).

The region spanning 10 to 88 (STVYVSNLPF…RVIKASIAID (79 aa)) is the RRM domain. A CCHC-type zinc finger spans residues 105 to 122 (SKCYECGESGHLSYACPK). Positions 120–217 (CPKNMLGERE…YFSDEEELSD (98 aa)) are disordered. Residues 145–163 (PEEEIEEVEVSEEEGEDPA) show a composition bias toward acidic residues. Phosphoserine is present on residues S155, S210, and S216.

As to quaternary structure, component of the U11/U12 snRNPs that are part of the U12-type spliceosome. Interacts with ZRSR1.

Its subcellular location is the nucleus. It localises to the nucleoplasm. The protein is Zinc finger CCHC-type and RNA-binding motif-containing protein 1 (Zcrb1) of Rattus norvegicus (Rat).